Reading from the N-terminus, the 334-residue chain is HTH-type transcriptional regulator RegA (334 aa).

The region spanning 1-57 (MAASIKDVAREARVSIATVSRVLNNVDVVNEETKKKVMEAIKKLDYRPNIVARSLKT) is the HTH lacI-type domain. A DNA-binding region (H-T-H motif) is located at residues 5 to 24 (IKDVAREARVSIATVSRVLN).

In terms of biological role, involved in the regulation of amylase production. The chain is HTH-type transcriptional regulator RegA (regA) from Clostridium acetobutylicum (strain ATCC 824 / DSM 792 / JCM 1419 / IAM 19013 / LMG 5710 / NBRC 13948 / NRRL B-527 / VKM B-1787 / 2291 / W).